The following is a 545-amino-acid chain: Chaperonin GroEL (545 aa).

Residues 29 to 32 (TLGP), K50, 86 to 90 (DGTTT), G413, 479 to 481 (NAA), and D496 contribute to the ATP site. The interval 525–545 (KPEKEKAPAAAGAPDMGGMDF) is disordered. The span at 532–545 (PAAAGAPDMGGMDF) shows a compositional bias: low complexity.

It belongs to the chaperonin (HSP60) family. As to quaternary structure, forms a cylinder of 14 subunits composed of two heptameric rings stacked back-to-back. Interacts with the co-chaperonin GroES.

Its subcellular location is the cytoplasm. It catalyses the reaction ATP + H2O + a folded polypeptide = ADP + phosphate + an unfolded polypeptide.. Functionally, together with its co-chaperonin GroES, plays an essential role in assisting protein folding. The GroEL-GroES system forms a nano-cage that allows encapsulation of the non-native substrate proteins and provides a physical environment optimized to promote and accelerate protein folding. The chain is Chaperonin GroEL from Deinococcus geothermalis (strain DSM 11300 / CIP 105573 / AG-3a).